The sequence spans 430 residues: Tol-Pal system protein TolB (430 aa).

Residues 1–21 (MKQALRVAFGFLILWASVLHA) form the signal peptide.

Belongs to the TolB family. In terms of assembly, the Tol-Pal system is composed of five core proteins: the inner membrane proteins TolA, TolQ and TolR, the periplasmic protein TolB and the outer membrane protein Pal. They form a network linking the inner and outer membranes and the peptidoglycan layer.

Its subcellular location is the periplasm. Functionally, part of the Tol-Pal system, which plays a role in outer membrane invagination during cell division and is important for maintaining outer membrane integrity. TolB occupies a key intermediary position in the Tol-Pal system because it communicates directly with both membrane-embedded components, Pal in the outer membrane and TolA in the inner membrane. The sequence is that of Tol-Pal system protein TolB from Shigella flexneri serotype 5b (strain 8401).